An 86-amino-acid polypeptide reads, in one-letter code: MAKKSLNETSPVARFEQSLEELEQLVQKMEVGDLSLEQSLTAYERGIGLYRDCQQALEQAELRVRLLTDPARPELAQAFEPPSLDG.

It belongs to the XseB family. Heterooligomer composed of large and small subunits.

It is found in the cytoplasm. The enzyme catalyses Exonucleolytic cleavage in either 5'- to 3'- or 3'- to 5'-direction to yield nucleoside 5'-phosphates.. In terms of biological role, bidirectionally degrades single-stranded DNA into large acid-insoluble oligonucleotides, which are then degraded further into small acid-soluble oligonucleotides. The protein is Exodeoxyribonuclease 7 small subunit of Xanthomonas oryzae pv. oryzae (strain MAFF 311018).